Consider the following 95-residue polypeptide: 6 kDa early secretory antigenic target (95 aa).

Transmembrane regions (helical) follow at residues 11-43 (IEAA…AAAW) and 49-85 (EAYQ…AMAS). Positions 56 to 87 (QKWDATATELNNALQNLARTISEAGQAMASTE) form a coiled coil.

Belongs to the WXG100 family. ESAT-6 subfamily. In terms of assembly, forms a tight 1:1 complex with EsxB (CFP-10).

The protein localises to the secreted. Its subcellular location is the host membrane. A secreted protein. Acts as a strong host T-cell antigen. Plays a number of roles in modulating the host's immune response to infection as well as being responsible for bacterial escape into the host cytoplasm. In Mycobacterium bovis (strain ATCC BAA-935 / AF2122/97), this protein is 6 kDa early secretory antigenic target (esxA).